We begin with the raw amino-acid sequence, 347 residues long: Tsukushi (347 aa).

The N-terminal stretch at 1–19 (MASLLCLFFSLLGLAAIGA) is a signal peptide. The 42-residue stretch at 20-61 (VKNCHPQCRCEVETFGLFDSFSLTKVDCSRIGPGNTPVPIPL) folds into the LRRNT domain. LRR repeat units follow at residues 62–83 (DTSHLDLSLNSTTSISDTMLSG), 88–109 (TLVSLDLSSNLIAQISPKAFSK), 112–133 (YLETLDLSSNALEGLSDGCFTG), 135–156 (PLVELDLSENQFKEFNLDLFTT), 160–175 (DLPIMVDLSRNLLTSI), 185–205 (YIKSLMLAGNQLKTVPKLNGI), 206–227 (PLQYLNLDGNLISSIDTGAFDS), 230–252 (ELVHLSLSGLSELTLIHPGAFRS), 255–277 (NLQALDLSNNSQLKTLNPNVFSG), and 280–301 (SLQELNLSNTAVTPLSRTVFMQ). The N-linked (GlcNAc...) asparagine glycan is linked to N285.

As to quaternary structure, forms a ternary complex with chordin/CHRD and BMP4.

It is found in the secreted. Functionally, contributes to various developmental events through its interactions with multiple signaling pathways. Dorsalizing factor which functions as an inhibitor of bone morphogenetic proteins during gastrulation. This is Tsukushi (tsku) from Danio rerio (Zebrafish).